The chain runs to 86 residues: Large ribosomal subunit protein bL31B (86 aa).

The protein belongs to the bacterial ribosomal protein bL31 family. Type B subfamily. As to quaternary structure, part of the 50S ribosomal subunit.

This chain is Large ribosomal subunit protein bL31B, found in Citrobacter koseri (strain ATCC BAA-895 / CDC 4225-83 / SGSC4696).